The chain runs to 149 residues: Thioredoxin-like protein 4B (149 aa).

This sequence belongs to the DIM1 family. Homodimer. Interacts with the U5-102 kDa protein subunit of the spliceosome.

It localises to the nucleus. Essential role in pre-mRNA splicing. Required in cell cycle progression for S/G(2) transition. The protein is Thioredoxin-like protein 4B (TXNL4B) of Homo sapiens (Human).